The chain runs to 445 residues: Phosphoglucosamine mutase (445 aa).

Serine 102 serves as the catalytic Phosphoserine intermediate. Residues serine 102, aspartate 241, aspartate 243, and aspartate 245 each contribute to the Mg(2+) site. Residue serine 102 is modified to Phosphoserine.

Belongs to the phosphohexose mutase family. It depends on Mg(2+) as a cofactor. Activated by phosphorylation.

It catalyses the reaction alpha-D-glucosamine 1-phosphate = D-glucosamine 6-phosphate. Functionally, catalyzes the conversion of glucosamine-6-phosphate to glucosamine-1-phosphate. The chain is Phosphoglucosamine mutase from Shewanella baltica (strain OS155 / ATCC BAA-1091).